The sequence spans 106 residues: Late cornified envelope protein 2A (106 aa).

Over residues 1-10 (MSCQQNQQQC) the composition is skewed to low complexity. Residues 1–25 (MSCQQNQQQCQPPPKCPPKCPPKCP) form a disordered region. Over residues 11–25 (QPPPKCPPKCPPKCP) the composition is skewed to pro residues.

Belongs to the LCE family. As to quaternary structure, interacts with CYSRT1. Skin-specific. Expression was readily detected in adult trunk skin, adult arm skin, fetal skin, penal skin, vulva, esophagus and tongue. Not expressed in the cervix, rectum, lung, colon, or placenta.

Precursors of the cornified envelope of the stratum corneum. The sequence is that of Late cornified envelope protein 2A (LCE2A) from Homo sapiens (Human).